We begin with the raw amino-acid sequence, 585 residues long: ATP-dependent lipid A-core flippase (585 aa).

6 consecutive transmembrane segments (helical) span residues 25–45, 63–83, 127–146, 150–170, 250–270, and 277–297; these read FLAA…FPAI, WLFY…FGFL, IAYD…TSLI, LSIV…TLIT, QSPL…GVAL, and QTTV…MAPL. The ABC transmembrane type-1 domain occupies 26 to 309; sequence LAALACMGVA…VTDVNAPIQR (284 aa). The ABC transporter domain occupies 341–577; it reads VEFDGVTFTY…DGLYARLYRM (237 aa). 375–382 lines the ATP pocket; sequence GPSGSGKT.

It belongs to the ABC transporter superfamily. Lipid exporter (TC 3.A.1.106) family. Homodimer.

The protein resides in the cell inner membrane. It catalyses the reaction ATP + H2O + lipid A-core oligosaccharideSide 1 = ADP + phosphate + lipid A-core oligosaccharideSide 2.. Involved in lipopolysaccharide (LPS) biosynthesis. Translocates lipid A-core from the inner to the outer leaflet of the inner membrane. Transmembrane domains (TMD) form a pore in the inner membrane and the ATP-binding domain (NBD) is responsible for energy generation. This Dechloromonas aromatica (strain RCB) protein is ATP-dependent lipid A-core flippase.